The following is a 556-amino-acid chain: Cytochrome P450 monooxygenase polC (556 aa).

Residues 17–37 (LCFAISLLCAVAIATFLHKLY) traverse the membrane as a helical segment. Cys479 is a heme binding site.

This sequence belongs to the cytochrome P450 family. Heme serves as cofactor.

The protein localises to the membrane. The catalysed reaction is motiol + 3 reduced [NADPH--hemoprotein reductase] + 3 O2 = 4beta-carboxyl motiol + 3 oxidized [NADPH--hemoprotein reductase] + 4 H2O + 4 H(+). It participates in secondary metabolite biosynthesis; terpenoid biosynthesis. Its function is as follows. Cytochrome P450 monooxygenase; part of the gene cluster that mediates the biosynthesis of antifungal fernane-type triterpenoid polytolypin. PolC uses motiol as a substrate and converts the methyl group at position C-4 to a carboxyl group. Within the pathway, the triterpene cyclase polA first catalyzes the cyclization of 2,3-oxidosqualene to motiol, polC converts the 4-alpha-methyl group of motiol to a carboxyl group, polB is responsible for appending a hydroxyl group at the 2-alpha position and polE is a dual functional P450, which can catalyze the formation of both the 1-beta-hydroxyl group and 10-beta-carboxyl group. In Polytolypa hystricis (strain UAMH7299), this protein is Cytochrome P450 monooxygenase polC.